We begin with the raw amino-acid sequence, 83 residues long: Retinal cone rhodopsin-sensitive cGMP 3',5'-cyclic phosphodiesterase subunit gamma (83 aa).

Low complexity predominate over residues 1-19 (MSDNTTLAPPAASQAPATP). Residues 1-51 (MSDNTTLAPPAASQAPATPRKGPPKFKQRQTRQFKSKPPKKGVKGFGDDIP) form a disordered region. The span at 22-43 (GPPKFKQRQTRQFKSKPPKKGV) shows a compositional bias: basic residues.

It belongs to the rod/cone cGMP-PDE gamma subunit family. As to quaternary structure, tetramer composed of two catalytic chains (alpha and beta), and two inhibitory chains (gamma).

The enzyme catalyses 3',5'-cyclic GMP + H2O = GMP + H(+). Participates in processes of transmission and amplification of the visual signal. cGMP-PDEs are the effector molecules in G-protein-mediated phototransduction in vertebrate rods and cones. The sequence is that of Retinal cone rhodopsin-sensitive cGMP 3',5'-cyclic phosphodiesterase subunit gamma (PDE6H) from Ictidomys tridecemlineatus (Thirteen-lined ground squirrel).